The chain runs to 547 residues: Threonine synthase (547 aa).

Lys-117 is modified (N6-(pyridoxal phosphate)lysine). Pyridoxal 5'-phosphate contacts are provided by Gly-272, Asn-273, Phe-274, Asp-276, and Thr-471.

It belongs to the threonine synthase family. Requires pyridoxal 5'-phosphate as cofactor.

It carries out the reaction O-phospho-L-homoserine + H2O = L-threonine + phosphate. It participates in amino-acid biosynthesis; L-threonine biosynthesis; L-threonine from L-aspartate: step 5/5. Catalyzes the gamma-elimination of phosphate from L-phosphohomoserine and the beta-addition of water to produce L-threonine. The sequence is that of Threonine synthase from Cryptococcus neoformans var. grubii serotype A (strain H99 / ATCC 208821 / CBS 10515 / FGSC 9487) (Filobasidiella neoformans var. grubii).